The chain runs to 71 residues: Sec-independent protein translocase protein TatA (71 aa).

Residues 9 to 29 (LLLILAIVVILFGASRLPALG) traverse the membrane as a helical segment. The disordered stretch occupies residues 43-71 (FGGEDEKPTASGNGSTPTQSSSDQGSKQA). Residues 52 to 71 (ASGNGSTPTQSSSDQGSKQA) show a composition bias toward polar residues.

It belongs to the TatA/E family. As to quaternary structure, the Tat system comprises two distinct complexes: a TatABC complex, containing multiple copies of TatA, TatB and TatC subunits, and a separate TatA complex, containing only TatA subunits. Substrates initially bind to the TatABC complex, which probably triggers association of the separate TatA complex to form the active translocon.

It is found in the cell inner membrane. Part of the twin-arginine translocation (Tat) system that transports large folded proteins containing a characteristic twin-arginine motif in their signal peptide across membranes. TatA could form the protein-conducting channel of the Tat system. This is Sec-independent protein translocase protein TatA from Anaeromyxobacter dehalogenans (strain 2CP-C).